Consider the following 218-residue polypeptide: Riboflavin kinase (218 aa).

A signal peptide spans 1-19 (MFTWTIYVSLLLVLAGTFL). Positions 72 and 74 each coordinate Mg(2+). Residue Glu155 is the Nucleophile of the active site.

It belongs to the flavokinase family. It depends on Zn(2+) as a cofactor. The cofactor is Mg(2+).

The protein localises to the microsome. It is found in the mitochondrion inner membrane. Its subcellular location is the endoplasmic reticulum. It catalyses the reaction riboflavin + ATP = FMN + ADP + H(+). It participates in cofactor biosynthesis; FMN biosynthesis; FMN from riboflavin (ATP route): step 1/1. Its function is as follows. Catalyzes the phosphorylation of riboflavin (vitamin B2) to form flavin mononucleotide (FMN) coenzyme. The polypeptide is Riboflavin kinase (FMN1) (Saccharomyces cerevisiae (strain ATCC 204508 / S288c) (Baker's yeast)).